The chain runs to 115 residues: UPF0738 protein SSP1780 (115 aa).

This sequence belongs to the UPF0738 family.

In Staphylococcus saprophyticus subsp. saprophyticus (strain ATCC 15305 / DSM 20229 / NCIMB 8711 / NCTC 7292 / S-41), this protein is UPF0738 protein SSP1780.